A 263-amino-acid polypeptide reads, in one-letter code: Small ribosomal subunit protein eS4, Y isoform 1 (263 aa).

The 63-residue stretch at 42-104 (LPLIIFLRNR…TGEHFRLVYD (63 aa)) folds into the S4 RNA-binding domain.

It belongs to the eukaryotic ribosomal protein eS4 family.

This is Small ribosomal subunit protein eS4, Y isoform 1 (RPS4Y1) from Macaca fuscata fuscata (Japanese macaque).